The primary structure comprises 169 residues: Probable inosine/xanthosine triphosphatase (169 aa).

Residue Ser7–Lys12 coordinates substrate. Glu35 is a binding site for Mg(2+).

It belongs to the YjjX NTPase family. As to quaternary structure, homodimer. The cofactor is Mg(2+). Mn(2+) serves as cofactor.

The catalysed reaction is XTP + H2O = XDP + phosphate + H(+). It catalyses the reaction ITP + H2O = IDP + phosphate + H(+). In terms of biological role, phosphatase that hydrolyzes non-canonical purine nucleotides such as XTP and ITP to their respective diphosphate derivatives. Probably excludes non-canonical purines from DNA/RNA precursor pool, thus preventing their incorporation into DNA/RNA and avoiding chromosomal lesions. The chain is Probable inosine/xanthosine triphosphatase from Sulfurisphaera tokodaii (strain DSM 16993 / JCM 10545 / NBRC 100140 / 7) (Sulfolobus tokodaii).